The following is a 429-amino-acid chain: Formate-dependent phosphoribosylglycinamide formyltransferase (429 aa).

Residues 26 to 27 (EL) and glutamate 86 each bind N(1)-(5-phospho-beta-D-ribosyl)glycinamide. Residues arginine 118, lysine 159, 199-202 (EEHI), and glutamate 207 contribute to the ATP site. An ATP-grasp domain is found at 123–319 (ETLVKEAKVP…EFGLHLRAVL (197 aa)). Residues glutamate 276 and glutamate 288 each contribute to the Mg(2+) site. N(1)-(5-phospho-beta-D-ribosyl)glycinamide-binding positions include aspartate 295, lysine 375, and 382–383 (RR).

This sequence belongs to the PurK/PurT family. Homodimer.

It carries out the reaction N(1)-(5-phospho-beta-D-ribosyl)glycinamide + formate + ATP = N(2)-formyl-N(1)-(5-phospho-beta-D-ribosyl)glycinamide + ADP + phosphate + H(+). Its pathway is purine metabolism; IMP biosynthesis via de novo pathway; N(2)-formyl-N(1)-(5-phospho-D-ribosyl)glycinamide from N(1)-(5-phospho-D-ribosyl)glycinamide (formate route): step 1/1. In terms of biological role, involved in the de novo purine biosynthesis. Catalyzes the transfer of formate to 5-phospho-ribosyl-glycinamide (GAR), producing 5-phospho-ribosyl-N-formylglycinamide (FGAR). Formate is provided by PurU via hydrolysis of 10-formyl-tetrahydrofolate. The polypeptide is Formate-dependent phosphoribosylglycinamide formyltransferase (Pyrococcus abyssi (strain GE5 / Orsay)).